The chain runs to 39 residues: Cytochrome b559 subunit beta (39 aa).

The chain crosses the membrane as a helical span at residues 14–30; that stretch reads WLAVHGLAVPTVSFLGS. His-18 is a binding site for heme.

The protein belongs to the PsbE/PsbF family. In terms of assembly, heterodimer of an alpha subunit and a beta subunit. PSII is composed of 1 copy each of membrane proteins PsbA, PsbB, PsbC, PsbD, PsbE, PsbF, PsbH, PsbI, PsbJ, PsbK, PsbL, PsbM, PsbT, PsbX, PsbY, PsbZ, Psb30/Ycf12, at least 3 peripheral proteins of the oxygen-evolving complex and a large number of cofactors. It forms dimeric complexes. Heme b serves as cofactor.

It localises to the plastid. The protein localises to the chloroplast thylakoid membrane. In terms of biological role, this b-type cytochrome is tightly associated with the reaction center of photosystem II (PSII). PSII is a light-driven water:plastoquinone oxidoreductase that uses light energy to abstract electrons from H(2)O, generating O(2) and a proton gradient subsequently used for ATP formation. It consists of a core antenna complex that captures photons, and an electron transfer chain that converts photonic excitation into a charge separation. The protein is Cytochrome b559 subunit beta of Muilla maritima (Sea muilla).